We begin with the raw amino-acid sequence, 200 residues long: ATP synthase subunit s, mitochondrial (200 aa).

Residues 1-25 (MMMFGKISRQLCSLKKIPWSCDSRY) constitute a mitochondrion transit peptide. Residues 1 to 61 (MMMFGKISRQ…SEWLLRCGAK (61 aa)) form an N-terminal domain region. G59 is a Mg(2+) binding site. LRR repeat units follow at residues 62–87 (VRYCGHQKWLHDYNTLPGSSIDRYKI), 88–116 (QAIDATDSCIMDIGLDHMVGLEHVEKITL), 117–141 (CKCHYIEDNCLQRLSQLENLRKSLL), and 142–173 (ELEIIACGNVTDNGVIALRHFRNLKYLFLSDL). T93 is a Mg(2+) binding site.

Belongs to the ATP synthase subunit s family. In terms of assembly, homotetramer. Associates with ATP synthase.

It is found in the mitochondrion. The protein localises to the mitochondrion inner membrane. In terms of biological role, involved in regulation of mitochondrial membrane ATP synthase. Necessary for H(+) conduction of ATP synthase. Facilitates energy-driven catalysis of ATP synthesis by blocking a proton leak through an alternative proton exit pathway. This is ATP synthase subunit s, mitochondrial (Dmac2l) from Mus musculus (Mouse).